The sequence spans 156 residues: Melatonin receptor type 1A (156 aa).

3 helical membrane passes run 19 to 39 (LCYV…NLQT), 62 to 82 (TIAL…FCYL), and 115 to 135 (FVVF…GLIV).

This sequence belongs to the G-protein coupled receptor 1 family. In terms of tissue distribution, at least in the brain, more precisely in the pars tuberalis and the suprachiasmatic nucleus.

The protein resides in the cell membrane. Its function is as follows. High affinity receptor for melatonin. Likely to mediate the reproductive and circadian actions of melatonin. The activity of this receptor is mediated by pertussis toxin sensitive G proteins that inhibit adenylate cyclase activity. Possibly involved in sleep induction, by melatonin activation of the potassium channel KCNMA1/BK and the dissociation of G-beta and G-gamma subunits, thereby decreasing synaptic transmission. The chain is Melatonin receptor type 1A (Mtnr1a) from Rattus norvegicus (Rat).